The following is a 138-amino-acid chain: Endoribonuclease YbeY (138 aa).

The Zn(2+) site is built by His105, His109, and Asp115.

The protein belongs to the endoribonuclease YbeY family. Requires Zn(2+) as cofactor.

It is found in the cytoplasm. Functionally, single strand-specific metallo-endoribonuclease involved in late-stage 70S ribosome quality control and in maturation of the 3' terminus of the 16S rRNA. The chain is Endoribonuclease YbeY from Chlorobium phaeobacteroides (strain BS1).